The following is a 102-amino-acid chain: Small ribosomal subunit protein uS10 (102 aa).

It belongs to the universal ribosomal protein uS10 family. Part of the 30S ribosomal subunit.

Functionally, involved in the binding of tRNA to the ribosomes. This is Small ribosomal subunit protein uS10 from Rhodospirillum centenum (strain ATCC 51521 / SW).